A 474-amino-acid chain; its full sequence is tRNA-2-methylthio-N(6)-dimethylallyladenosine synthase (474 aa).

In terms of domain architecture, MTTase N-terminal spans 21–138 (ERVYVETQGC…LPQMLARRRS (118 aa)). Positions 30, 67, 101, 175, 179, and 182 each coordinate [4Fe-4S] cluster. Residues 161–395 (RAEGPTAYVS…ARLHEQQSAA (235 aa)) form the Radical SAM core domain. Residues 397–460 (RALLGTRQSV…THSLRGRVVS (64 aa)) form the TRAM domain.

The protein belongs to the methylthiotransferase family. MiaB subfamily. As to quaternary structure, monomer. [4Fe-4S] cluster serves as cofactor.

It is found in the cytoplasm. The catalysed reaction is N(6)-dimethylallyladenosine(37) in tRNA + (sulfur carrier)-SH + AH2 + 2 S-adenosyl-L-methionine = 2-methylsulfanyl-N(6)-dimethylallyladenosine(37) in tRNA + (sulfur carrier)-H + 5'-deoxyadenosine + L-methionine + A + S-adenosyl-L-homocysteine + 2 H(+). Its function is as follows. Catalyzes the methylthiolation of N6-(dimethylallyl)adenosine (i(6)A), leading to the formation of 2-methylthio-N6-(dimethylallyl)adenosine (ms(2)i(6)A) at position 37 in tRNAs that read codons beginning with uridine. The chain is tRNA-2-methylthio-N(6)-dimethylallyladenosine synthase from Halorhodospira halophila (strain DSM 244 / SL1) (Ectothiorhodospira halophila (strain DSM 244 / SL1)).